A 648-amino-acid polypeptide reads, in one-letter code: MAAGVATWLPFARAAAVGWLPLAQQPLPPAPGVKASRGDEVLVVNVSGRRFETWKNTLDRYPDTLLGSSEKEFFYNADSGEYFFDRDPDMFRHVLNFYRTGRLHCPRQECIQAFDEELAFYGLVPELVGDCCLEEYRDRKKENAERLAEDEEAEQAGDGPTLPAGSSLRQRLWRAFENPHTSTAALVFYYVTGFFIAVSVIANVVETIPCRSPTRRPPREQPCGDRFPLAFFCMDTACVLIFTGEYLLRLFAAPSRCRFLRSVMSLIDVVAILPYYIGLFMPKNEDVSGAFVTLRVFRVFRIFKFSRHSQGLRILGYTLKSCASELGFLLFSLTMAIIIFATVMFYAEKGTNKTNFTSIPAAFWYTIVTMTTLGYGDMVPSTIAGKIFGSICSLSGVLVIALPVPVIVSNFSRIYHQNQRADKRRAQQKVRLARIRLAKSGTTNAFLQYKQNGSLEDSGGGEEQALCVRNRSAFEQQHHHLLHCLEKTTCHEFTDELTFSEALGAVSLGSRTSRSTSVSSQPVGAGSLLSSCCPRRAKRRAIRLANSTASVSRGSMQELDTLAGLRRSPAPQSRSSLNAKPHDSLDLTCDSRDFVAAIISIPTPPANTPDESQPSSPGGGGGGASSTLRNSSLGTPCLLPETVKISSL.

Residues 1–183 (MAAGVATWLP…RAFENPHTST (183 aa)) are Cytoplasmic-facing. The interval 2–20 (AAGVATWLPFARAAAVGWL) is interaction with KCNIP1, KCNIP2, and other family members. The segment at 2 to 20 (AAGVATWLPFARAAAVGWL) is interaction with KCNIP2. Residues histidine 104, cysteine 131, and cysteine 132 each contribute to the Zn(2+) site. The disordered stretch occupies residues 144–164 (AERLAEDEEAEQAGDGPTLPA). A helical transmembrane segment spans residues 184 to 205 (AALVFYYVTGFFIAVSVIANVV). At 206-230 (ETIPCRSPTRRPPREQPCGDRFPLA) the chain is on the extracellular side. The helical transmembrane segment at 231–252 (FFCMDTACVLIFTGEYLLRLFA) threads the bilayer. Residues 253-263 (APSRCRFLRSV) are Cytoplasmic-facing. A helical transmembrane segment spans residues 264–284 (MSLIDVVAILPYYIGLFMPKN). Residues 285 to 287 (EDV) are Extracellular-facing. The chain crosses the membrane as a helical; Voltage-sensor span at residues 288 to 308 (SGAFVTLRVFRVFRIFKFSRH). At 309 to 323 (SQGLRILGYTLKSCA) the chain is on the cytoplasmic side. Residues 310 to 323 (QGLRILGYTLKSCA) are S4-S5 linker. A helical membrane pass occupies residues 324–345 (SELGFLLFSLTMAIIIFATVMF). Topologically, residues 346-359 (YAEKGTNKTNFTSI) are extracellular. N-linked (GlcNAc...) asparagine glycans are attached at residues asparagine 352 and asparagine 355. The segment at residues 360-371 (PAAFWYTIVTMT) is an intramembrane region (helical). A Selectivity filter motif is present at residues 372–377 (TLGYGD). The stretch at 372-379 (TLGYGDMV) is an intramembrane region. The Extracellular segment spans residues 380-386 (PSTIAGK). Residues 387-415 (IFGSICSLSGVLVIALPVPVIVSNFSRIY) traverse the membrane as a helical segment. At 416–648 (HQNQRADKRR…LPETVKISSL (233 aa)) the chain is on the cytoplasmic side. Serine 458 is subject to Phosphoserine. The mediates dendritic targeting stretch occupies residues 474–489 (FEQQHHHLLHCLEKTT). The required for dendritic targeting stretch occupies residues 474 to 489 (FEQQHHHLLHCLEKTT). The residue at position 555 (serine 555) is a Phosphoserine. Positions 601 to 636 (IPTPPANTPDESQPSSPGGGGGGASSTLRNSSLGTP) are disordered.

It belongs to the potassium channel family. D (Shal) (TC 1.A.1.2) subfamily. Kv4.1/KCND1 sub-subfamily. Component of heteromultimeric potassium channels. Identified in potassium channel complexes containing KCND1, KCND2, KCND3, KCNIP1, KCNIP2, KCNIP3, KCNIP4, DPP6 and DPP10.

The protein localises to the cell membrane. The enzyme catalyses K(+)(in) = K(+)(out). Its function is as follows. A-type voltage-gated potassium channel that mediates transmembrane potassium transport in excitable membranes in the brain. Mediates A-type current I(SA) in suprachiasmatic nucleus (SCN) neurons. Exhibits a low-threshold A-type current with a hyperpolarized steady-state inactivation midpoint and the recovery process was steeply voltage-dependent, with recovery being markedly faster at more negative potentials. May regulates repetitive firing rates in the suprachiasmatic nucleus (SCN) neurons and circadian rhythms in neuronal excitability and behavior. Contributes to the regulation of the circadian rhythm of action potential firing in suprachiasmatic nucleus neurons, which regulates the circadian rhythm of locomotor activity. The regulatory subunit KCNIP1 modulates the kinetics of channel inactivation, increases the current amplitudes and accelerates recovery from inactivation, shifts activation in a depolarizing direction. The regulatory subunit DPP10 decreases the voltage sensitivity of the inactivation channel gating. This is A-type voltage-gated potassium channel KCND1 from Bos taurus (Bovine).